Consider the following 658-residue polypeptide: Staphylocoagulase (658 aa).

The signal sequence occupies residues 1–26 (MKKQIISLGALAVASSLFTWDNKADA). Polar residues-rich tracts occupy residues 391–406 (MEQN…TQPT), 428–440 (GTES…QGES), 499–514 (PSET…QDGT), and 521–531 (PTQNKPSETNA). The tract at residues 391-531 (MEQNRPSLSD…TQNKPSETNA (141 aa)) is disordered. Repeat copies occupy residues 492–518 (ARPR…VSYG), 519–545 (ARPT…VSYG), 546–572 (ARPT…VSYG), 573–599 (ARPT…VSYG), 600–626 (ARPT…VSYG), and 627–653 (ARPT…ATYG). The tract at residues 492–653 (ARPRFNKPSE…THADGTATYG (162 aa)) is 6 X 27 AA tandem repeats of A-R-P-[RT]-[FQY]-[NK]-K-P-S-[EK]-T-N-A-Y-N-V-T-T-[NH]-[QA]-[DN]-G-[TQ]-[VA]-[ST]-Y-G. Residues 619 to 658 (ANGQVSYGARPTQKKPSETNAYNVTTHADGTATYGPRVTK) form a disordered region. Residues 636 to 646 (ETNAYNVTTHA) are compositionally biased toward polar residues.

This sequence belongs to the staphylocoagulase family.

Its function is as follows. Staphylocoagulase is an extracellular protein which specifically forms a complex with human prothrombin. This complex named staphylothrombin can clot fibrinogen without any proteolytic cleavage of prothrombin. The chain is Staphylocoagulase from Staphylococcus aureus.